A 286-amino-acid chain; its full sequence is Shikimate dehydrogenase (NADP(+)) (286 aa).

Residues 22 to 24 and Thr-71 each bind shikimate; that span reads SRS. Lys-75 serves as the catalytic Proton acceptor. Glu-87 provides a ligand contact to NADP(+). Asn-96 and Asp-111 together coordinate shikimate. Residues 136 to 140, 160 to 165, and Ile-225 each bind NADP(+); these read GAGGA and NRTAAR. Residue Tyr-227 participates in shikimate binding. Gly-248 is a binding site for NADP(+).

It belongs to the shikimate dehydrogenase family. Homodimer.

It carries out the reaction shikimate + NADP(+) = 3-dehydroshikimate + NADPH + H(+). It functions in the pathway metabolic intermediate biosynthesis; chorismate biosynthesis; chorismate from D-erythrose 4-phosphate and phosphoenolpyruvate: step 4/7. Involved in the biosynthesis of the chorismate, which leads to the biosynthesis of aromatic amino acids. Catalyzes the reversible NADPH linked reduction of 3-dehydroshikimate (DHSA) to yield shikimate (SA). The chain is Shikimate dehydrogenase (NADP(+)) from Sinorhizobium fredii (strain NBRC 101917 / NGR234).